We begin with the raw amino-acid sequence, 115 residues long: Dolichyl-diphosphooligosaccharide--protein glycosyltransferase subunit DAD2 (115 aa).

The Cytoplasmic portion of the chain corresponds to 1 to 31 (MVKSTSKDAQDLFHSLHSAYTATPTNLKIID). The chain crosses the membrane as a helical span at residues 32–52 (LYVCFAVFTALIQVAYMALVG). Over 53–55 (SFP) the chain is Lumenal. A helical membrane pass occupies residues 56 to 76 (FNSFLSGVLSCIGTAVLAVCL). The Cytoplasmic segment spans residues 77–94 (RIQVNKENKEFKDLAPER). A helical membrane pass occupies residues 95 to 115 (AFADFVLCNLVLHLVIINFLG).

Belongs to the DAD/OST2 family. In terms of assembly, component of the oligosaccharyltransferase (OST) complex.

It is found in the endoplasmic reticulum membrane. It participates in protein modification; protein glycosylation. Subunit of the oligosaccharyl transferase (OST) complex that catalyzes the initial transfer of a defined glycan (Glc(3)Man(9)GlcNAc(2) in eukaryotes) from the lipid carrier dolichol-pyrophosphate to an asparagine residue within an Asn-X-Ser/Thr consensus motif in nascent polypeptide chains, the first step in protein N-glycosylation. N-glycosylation occurs cotranslationally and the complex associates with the Sec61 complex at the channel-forming translocon complex that mediates protein translocation across the endoplasmic reticulum (ER). All subunits are required for a maximal enzyme activity. This chain is Dolichyl-diphosphooligosaccharide--protein glycosyltransferase subunit DAD2 (DAD2), found in Arabidopsis thaliana (Mouse-ear cress).